A 152-amino-acid polypeptide reads, in one-letter code: MCSLPMARYYIIKDAHQKALYTRNGQLLLGDPDSDNYSPEKVCILPNRGLDRSKVPIFLGMQGGSCCLACVKTREGPLLQLEDVNIEDLYKGGEQTTRFTFFQRSLGSAFRLEAAACPGWFLCGPAEPQQPVQLTKESEPSTHTEFYFEMSR.

The protein belongs to the IL-1 family. In terms of assembly, interacts with cargo receptor TMED10; the interaction mediates the translocation from the cytoplasm into the ERGIC (endoplasmic reticulum-Golgi intermediate compartment) and thereby secretion.

It localises to the cytoplasm. Its subcellular location is the endoplasmic reticulum-Golgi intermediate compartment. It is found in the secreted. Functionally, cytokine with immunomodulatory activity. Alone, does not induce cytokine production, but reduces IL22 and IL17A production by T-cells in response to heat-killed Candida albicans. Reduces IL36G-induced production of IL8 by peripheral blood mononuclear cells. Increases IL6 production by dendritic cells stimulated by bacterial lipopolysaccharides (LPS). Ligand for IL-36R/IL1RL2. This chain is Interleukin-1 family member 10 (Il1f10), found in Mus musculus (Mouse).